Reading from the N-terminus, the 166-residue chain is uncharacterized protein (166 aa).

This is an uncharacterized protein from Invertebrate iridescent virus 6 (IIV-6).